The primary structure comprises 228 residues: MNLSLFAIALGGAAGALARFWVSNGLYGWLGRDFPHGTLFINVSGSFLMGFLSVMMIQRFALAAEYRAAVLVGFLGAYTTFSTFSLETLALFEEGSLLKAALNVLLSVVLCLAAVWVGAVLARRLAVGEIAALVGGPGLRIFGAACGMSLLAGFAAALAFARAGLGPQLESLVLVALTGLVVVGTLVALVVTGTELRGAFQLWGAFTLSAFAAVVFLSLGLVLARGAG.

7 helical membrane-spanning segments follow: residues 3–23 (LSLF…FWVS), 37–57 (GTLF…VMMI), 72–92 (VGFL…LALF), 101–121 (ALNV…GAVL), 141–161 (IFGA…LAFA), 172–192 (LVLV…LVVT), and 202–222 (LWGA…LGLV). The Na(+) site is built by glycine 76 and threonine 79.

It belongs to the fluoride channel Fluc/FEX (TC 1.A.43) family.

The protein localises to the cell inner membrane. It carries out the reaction fluoride(in) = fluoride(out). Na(+) is not transported, but it plays an essential structural role and its presence is essential for fluoride channel function. Fluoride-specific ion channel. Important for reducing fluoride concentration in the cell, thus reducing its toxicity. This chain is Fluoride-specific ion channel FluC, found in Methylococcus capsulatus (strain ATCC 33009 / NCIMB 11132 / Bath).